Here is a 565-residue protein sequence, read N- to C-terminus: CTP synthase (565 aa).

Positions 1-272 (MARPKNVKHI…DLRVMKKLGL (272 aa)) are amidoligase domain. CTP is bound at residue Ser18. Ser18 serves as a coordination point for UTP. 19-24 (SLGKGI) lines the ATP pocket. Tyr59 contacts L-glutamine. Residue Asp76 coordinates ATP. The Mg(2+) site is built by Asp76 and Glu146. Residues 153–155 (DIE), 193–198 (KTKPTQ), and Lys229 each bind CTP. UTP-binding positions include 193 to 198 (KTKPTQ) and Lys229. One can recognise a Glutamine amidotransferase type-1 domain in the interval 299 to 543 (TIGVCGKYTE…VQAAKEFAMG (245 aa)). Residue Gly363 participates in L-glutamine binding. Cys390 (nucleophile; for glutamine hydrolysis) is an active-site residue. L-glutamine is bound by residues 391-394 (LGMQ), Glu414, and Arg471. Active-site residues include His516 and Glu518.

Belongs to the CTP synthase family. As to quaternary structure, homotetramer.

It carries out the reaction UTP + L-glutamine + ATP + H2O = CTP + L-glutamate + ADP + phosphate + 2 H(+). It catalyses the reaction L-glutamine + H2O = L-glutamate + NH4(+). The enzyme catalyses UTP + NH4(+) + ATP = CTP + ADP + phosphate + 2 H(+). It participates in pyrimidine metabolism; CTP biosynthesis via de novo pathway; CTP from UDP: step 2/2. Its activity is regulated as follows. Allosterically activated by GTP, when glutamine is the substrate; GTP has no effect on the reaction when ammonia is the substrate. The allosteric effector GTP functions by stabilizing the protein conformation that binds the tetrahedral intermediate(s) formed during glutamine hydrolysis. Inhibited by the product CTP, via allosteric rather than competitive inhibition. Functionally, catalyzes the ATP-dependent amination of UTP to CTP with either L-glutamine or ammonia as the source of nitrogen. Regulates intracellular CTP levels through interactions with the four ribonucleotide triphosphates. In Chlorobaculum parvum (strain DSM 263 / NCIMB 8327) (Chlorobium vibrioforme subsp. thiosulfatophilum), this protein is CTP synthase.